A 272-amino-acid polypeptide reads, in one-letter code: Arylesterase (272 aa).

The region spanning 21–253 (KPVLFSHGWL…LKVYKDAPHG (233 aa)) is the AB hydrolase-1 domain. Trp-29 is an acetate binding site. Ser-95 is a catalytic residue. Met-96 contributes to the acetate binding site. Active-site residues include Asp-223 and His-252.

The protein belongs to the AB hydrolase superfamily. Bacterial non-heme haloperoxidase / perhydrolase family. As to quaternary structure, dimer of trimers.

The enzyme catalyses a phenyl acetate + H2O = a phenol + acetate + H(+). The catalysed reaction is peracetic acid + H2O = acetate + H2O2 + H(+). It catalyses the reaction a percarboxylic acid + H2O = a carboxylate + H2O2 + H(+). Its function is as follows. Hydrolyzes phenolic esters, such as phenyl acetate, nitrophenyl acetate and naphtyl acetate. Can act on a wide range of esters, but reaction rate and enantioselectivity differ significantly depending on the substrate. Shows a preference for esters with small acyl groups. Also shows low perhydrolase activity, and catalyzes the reversible formation of peroxycarboxylic acids from carboxylic acids and hydrogen peroxide. In vitro, enzyme-generated peracetic acid oxidizes bromide ion to bromonium, which reacts with monochlorodimedone to form bromochlorodimedone. In Pseudomonas fluorescens, this protein is Arylesterase.